Here is a 393-residue protein sequence, read N- to C-terminus: Xylose transport system permease protein XylH (393 aa).

Residues 1–24 lie on the Periplasmic side of the membrane; that stretch reads MSKSNPSEVKLAVPTSGGFSGLKS. Residues 25–45 form a helical membrane-spanning segment; it reads LNLQVFVMIAAIIAIMLFFTW. At 46 to 64 the chain is on the cytoplasmic side; the sequence is TTDGAYLSARNVSNLLRQT. The chain crosses the membrane as a helical span at residues 65–85; it reads AITGILAVGMVFVIISAEIDL. Over 86–102 the chain is Periplasmic; it reads SVGSMMGLLGGVAAICD. A helical membrane pass occupies residues 103–123; the sequence is VWLGWPLPLTIIVTLVLGLLL. Topologically, residues 124 to 135 are cytoplasmic; that stretch reads GAWNGWWVAYRK. Residues 136 to 156 form a helical membrane-spanning segment; the sequence is VPSFIVTLAGMLAFRGILIGI. The Periplasmic segment spans residues 157–175; that stretch reads TNGTTVSPTSAAMSQIGQS. Residues 176–196 form a helical membrane-spanning segment; sequence YLPASTGFIIGALGLMAFVGW. The Cytoplasmic portion of the chain corresponds to 197–214; sequence QWRGRMRRQALGLQSPAS. Residues 215 to 235 traverse the membrane as a helical segment; the sequence is TAVVGRQALTAIIVLGAIWLL. Topologically, residues 236 to 239 are periplasmic; that stretch reads NDYR. Residues 240-260 form a helical membrane-spanning segment; sequence GVPTPVLLLTLLLLGGMFMAT. The Cytoplasmic portion of the chain corresponds to 261-287; the sequence is RTAFGRRIYAIGGNLEAARLSGINVER. Residues 288 to 308 traverse the membrane as a helical segment; it reads TKLAVFAINGLMVAIAGLILS. Residues 309 to 312 lie on the Periplasmic side of the membrane; the sequence is SRLG. The helical transmembrane segment at 313–333 threads the bilayer; sequence AGSPSAGNIAELDAIAACVIG. At 334–336 the chain is on the cytoplasmic side; the sequence is GTS. A helical membrane pass occupies residues 337 to 357; sequence LAGGVGSVAGAVMGAFIMASL. Topologically, residues 358-365 are periplasmic; it reads DNGMSMMD. A helical transmembrane segment spans residues 366-386; that stretch reads VPTFWQYIVKGAILLLAVWMD. At 387-393 the chain is on the cytoplasmic side; that stretch reads SATKRRS.

This sequence belongs to the binding-protein-dependent transport system permease family. AraH/RbsC subfamily.

It localises to the cell inner membrane. In terms of biological role, part of the binding-protein-dependent transport system for D-xylose. Probably responsible for the translocation of the substrate across the membrane. The protein is Xylose transport system permease protein XylH (xylH) of Escherichia coli O6:H1 (strain CFT073 / ATCC 700928 / UPEC).